A 365-amino-acid polypeptide reads, in one-letter code: Solute carrier family 35 member G1 (365 aa).

The tract at residues 1-33 (MRPQDSTGVAELQEPGLPLTDDAPPGATEEPAA) is disordered. A compositionally biased stretch (low complexity) spans 23 to 33 (APPGATEEPAA). The next 10 helical transmembrane spans lie at 69–89 (GLGLFYTLLSAFLFSVGSLFV), 97–117 (AVEISAFRCVFQMLVVIPCLI), 131–151 (IFLILRGVLGSTAMMLIYYAY), 156–176 (LADATVITFSSPVFTSIFAWI), 187–207 (ALFTVFTITGVILIVRPPFLF), 222–242 (LKGTFAAIGSAVFAASTLVIL), 252–272 (FLSIWYYVVLGLVESVIILSV), 286–306 (LFLIFIGLFGLGGQIFITKAL), 311–333 (AGPVAIMKTMDVVFAFIFQIIFF), and 338–357 (TWWTVGGALCVVASNVGAAI). 2 consecutive EamA domains span residues 80–202 (FLFS…LIVR) and 233–357 (VFAA…GAAI).

This sequence belongs to the TMEM20 family. Interacts with STIM1; stimulated by depletion of intracellular calcium. Interacts with ORAI1. Interacts with the plasma membrane calcium-transporting ATPases ATP2B1 and ATP2B4. Interacts with ATP1A1, ATP2A2, KPNB1 and XPO1. Ubiquitously expressed.

Its subcellular location is the cell membrane. The protein localises to the endoplasmic reticulum membrane. Functionally, may play a role in intracellular calcium sensing and homeostasis. May act as a negative regulator of plasma membrane calcium-transporting ATPases preventing calcium efflux from the cell. This chain is Solute carrier family 35 member G1 (SLC35G1), found in Homo sapiens (Human).